Consider the following 479-residue polypeptide: Monodictyphenone cluster transcriptional coactivator mdpA (479 aa).

The 71-residue stretch at 77 to 147 (LAVQNQLLAC…DPGQVAHSAL (71 aa)) folds into the HTH iclR-type domain. The segment at residues 107–126 (IKDVAELAGVPETHLSRIIR) is a DNA-binding region (H-T-H motif). Disordered stretches follow at residues 281-305 (GPTA…HKHD) and 314-333 (TAST…TTNS). Pro residues predominate over residues 289-298 (HPNPIRPPTP). A compositionally biased stretch (low complexity) spans 314–323 (TASTTPASSH).

It localises to the nucleus. Functionally, transcriptional coactivator; part of the gene cluster that mediates the biosynthesis of monodictyphenone, a prenyl xanthone derivative. With mdpE, coregulates the production of monodictyphenone. The polypeptide is Monodictyphenone cluster transcriptional coactivator mdpA (Emericella nidulans (strain FGSC A4 / ATCC 38163 / CBS 112.46 / NRRL 194 / M139) (Aspergillus nidulans)).